Reading from the N-terminus, the 689-residue chain is Glycine--tRNA ligase beta subunit (689 aa).

This sequence belongs to the class-II aminoacyl-tRNA synthetase family. Tetramer of two alpha and two beta subunits.

It localises to the cytoplasm. It carries out the reaction tRNA(Gly) + glycine + ATP = glycyl-tRNA(Gly) + AMP + diphosphate. This is Glycine--tRNA ligase beta subunit from Escherichia coli O7:K1 (strain IAI39 / ExPEC).